We begin with the raw amino-acid sequence, 400 residues long: MEAVLPSRCNREDVPGKARAERFVSGFPSVCEQKTEQEKLSGVVKRVHLDLRKKYRKAGDFEKIWLEHCKDDGRLCEYAVAMKALADNHWAKKCEGEGRIEWCLGVCQEYFFNGGKKKALEKDAKRDALNKLQSSSHAEAGVSDFGVPSIKPLNDEYMTGKIRLLDVGSCYNPFLKYEDFLAVGIDIVPAVETVFKCDFLNLQIQRPLQLAPDAIDAFLKQLSSPIDYLPTELFHVIVFSLLLSYFPSPYQRWICCKKAHELLTLNGLLLIITPDSSHQNRHAVMMKSWKIAIESLGFRRMTYSKFSHMHLMAFRKTSLKTTSDLLTRNYPDMLYIPQDFNYDGEEDHFSPCCARSELEDEQLACGFTELPDTPYDSDSGESHNSTMPFYEFEDPILLLT.

Residues arginine 99, glycine 168, aspartate 186, aspartate 198, phenylalanine 199, and serine 240 each coordinate S-adenosyl-L-methionine.

The protein belongs to the BMT2/SAMTOR family. Interacts with the GATOR1 complex; interaction is disrupted when samtor binds S-adenosyl-L-methionine. Interacts with the KICSTOR complex; interaction is disrupted when samtor binds S-adenosyl-L-methionine.

Its function is as follows. S-adenosyl-L-methionine-binding protein that acts as an inhibitor of mTORC1 signaling via interaction with the GATOR1 and KICSTOR complexes. Acts as a sensor of S-adenosyl-L-methionine to signal methionine sufficiency to mTORC1: in presence of methionine, binds S-adenosyl-L-methionine, leading to disrupt interaction with the GATOR1 and KICSTOR complexes and promote mTORC1 signaling. Upon methionine starvation, S-adenosyl-L-methionine levels are reduced, thereby promoting the association with GATOR1 and KICSTOR, leading to inhibit mTORC1 signaling. Probably also acts as a S-adenosyl-L-methionine-dependent methyltransferase. The polypeptide is S-adenosylmethionine sensor upstream of mTORC1 (Xenopus laevis (African clawed frog)).